The following is a 419-amino-acid chain: Gamma-glutamyl phosphate reductase (419 aa).

The protein belongs to the gamma-glutamyl phosphate reductase family.

It is found in the cytoplasm. It catalyses the reaction L-glutamate 5-semialdehyde + phosphate + NADP(+) = L-glutamyl 5-phosphate + NADPH + H(+). The protein operates within amino-acid biosynthesis; L-proline biosynthesis; L-glutamate 5-semialdehyde from L-glutamate: step 2/2. Functionally, catalyzes the NADPH-dependent reduction of L-glutamate 5-phosphate into L-glutamate 5-semialdehyde and phosphate. The product spontaneously undergoes cyclization to form 1-pyrroline-5-carboxylate. In Yersinia enterocolitica serotype O:8 / biotype 1B (strain NCTC 13174 / 8081), this protein is Gamma-glutamyl phosphate reductase.